Here is a 221-residue protein sequence, read N- to C-terminus: Carbonic anhydrase (221 aa).

Positions 57, 59, 112, and 115 each coordinate Zn(2+).

It belongs to the beta-class carbonic anhydrase family. The cofactor is Zn(2+).

It localises to the cytoplasm. The protein localises to the nucleus. Its subcellular location is the mitochondrion intermembrane space. It catalyses the reaction hydrogencarbonate + H(+) = CO2 + H2O. In terms of biological role, catalyzes the reversible hydration of CO(2) to H(2)CO(3). The main role may be to provide inorganic carbon for the bicarbonate-dependent carboxylation reactions catalyzed by pyruvate carboxylase, acetyl-CoA carboxylase and carbamoyl-phosphate synthetase. Involved in protection against oxidative damage. Encodes a substrate for the non-classical protein export pathway for proteins that lack a cleavable signal sequence. In Saccharomyces cerevisiae (strain ATCC 204508 / S288c) (Baker's yeast), this protein is Carbonic anhydrase (NCE103).